Reading from the N-terminus, the 934-residue chain is 2-oxoglutarate dehydrogenase E1 component (934 aa).

Residues 515–537 (RAAQDKIDKSDKMDNPDMERPES) show a composition bias toward basic and acidic residues. A disordered region spans residues 515-544 (RAAQDKIDKSDKMDNPDMERPESLQEPLQS).

The protein belongs to the alpha-ketoglutarate dehydrogenase family. In terms of assembly, homodimer. Part of the 2-oxoglutarate dehydrogenase (OGDH) complex composed of E1 (2-oxoglutarate dehydrogenase), E2 (dihydrolipoamide succinyltransferase) and E3 (dihydrolipoamide dehydrogenase); the complex contains multiple copies of the three enzymatic components (E1, E2 and E3). Requires thiamine diphosphate as cofactor.

The enzyme catalyses N(6)-[(R)-lipoyl]-L-lysyl-[protein] + 2-oxoglutarate + H(+) = N(6)-[(R)-S(8)-succinyldihydrolipoyl]-L-lysyl-[protein] + CO2. Functionally, E1 component of the 2-oxoglutarate dehydrogenase (OGDH) complex which catalyzes the decarboxylation of 2-oxoglutarate, the first step in the conversion of 2-oxoglutarate to succinyl-CoA and CO(2). This chain is 2-oxoglutarate dehydrogenase E1 component, found in Staphylococcus haemolyticus (strain JCSC1435).